The primary structure comprises 386 residues: MSRTLQLTEQLISLPSVTPEDAGCLELLADALQPMGFACERIDSGPDSFRVRNLWARRSGTGADRPVLVFAGHTDVVPTGPLEQWSSPPFVPTHRDGKLYGRGASDMKTSIAAFVVALEEFLAETPAPSFDIALLLTSDEEGPSVDGTKVVVELLRERGERLDWCIVGEPTSVERTGDMIKNGRRGTMSGRLTVKGIQGHIAYPQLARNPIHQALPALAELAATRWDEGNAFFPPTSWQISNMHGGTGASNVIPGHVTIDFNFRFCTESTAESLQQRVHAVLDHHGLEYELAWTIGGQPFLTTPGTLVNAVQAAIRAETGLETELSTTGGTSDGRFIAQICSQVVEVGPSNASIHKIDEHIVVADIEPIKNIYRRTLQELQRQQAV.

His-73 is a Zn(2+) binding site. Asp-75 is a catalytic residue. Residue Asp-106 coordinates Zn(2+). Glu-140 serves as the catalytic Proton acceptor. Zn(2+) is bound by residues Glu-141, Glu-169, and His-355.

Belongs to the peptidase M20A family. DapE subfamily. In terms of assembly, homodimer. Zn(2+) serves as cofactor. Requires Co(2+) as cofactor.

The enzyme catalyses N-succinyl-(2S,6S)-2,6-diaminopimelate + H2O = (2S,6S)-2,6-diaminopimelate + succinate. Its pathway is amino-acid biosynthesis; L-lysine biosynthesis via DAP pathway; LL-2,6-diaminopimelate from (S)-tetrahydrodipicolinate (succinylase route): step 3/3. Its function is as follows. Catalyzes the hydrolysis of N-succinyl-L,L-diaminopimelic acid (SDAP), forming succinate and LL-2,6-diaminopimelate (DAP), an intermediate involved in the bacterial biosynthesis of lysine and meso-diaminopimelic acid, an essential component of bacterial cell walls. This Delftia acidovorans (strain DSM 14801 / SPH-1) protein is Succinyl-diaminopimelate desuccinylase.